The chain runs to 579 residues: Putative adenine deaminase OB0751 (579 aa).

The protein belongs to the metallo-dependent hydrolases superfamily. Adenine deaminase family.

It catalyses the reaction adenine + H2O + H(+) = hypoxanthine + NH4(+). The protein is Putative adenine deaminase OB0751 of Oceanobacillus iheyensis (strain DSM 14371 / CIP 107618 / JCM 11309 / KCTC 3954 / HTE831).